The primary structure comprises 1207 residues: Dermatan-sulfate epimerase-like protein (1207 aa).

The first 22 residues, 1-22, serve as a signal peptide directing secretion; it reads MAFMFTEHLLFLTLMMCSFSTC. N-linked (GlcNAc...) asparagine glycosylation is found at Asn28, Asn661, Asn683, and Asn704. 2 helical membrane passes run 761 to 781 and 798 to 818; these read FPFGFKFNIAVGFILCISLVI and CVLILVIALWFIELLDVWSTC. Asn869 is a glycosylation site (N-linked (GlcNAc...) asparagine).

Belongs to the dermatan-sulfate isomerase family.

The protein localises to the membrane. In Mus musculus (Mouse), this protein is Dermatan-sulfate epimerase-like protein (Dsel).